The sequence spans 400 residues: Serine/threonine transporter SstT (400 aa).

9 consecutive transmembrane segments (helical) span residues 9 to 29 (LVTQIAIAVVIGIVLAAVWPA), 36 to 56 (ILGSLFISALKAVAPVLVFVL), 75 to 95 (VLVLYAVGTLAAATVGVVASM), 134 to 154 (ALLEANYIGILAWAIALGLAL), 175 to 195 (VIQLVIRLAPLGILGLVASTF), 209 to 229 (LLAVLLGCMLFVALVVNPLIV), 281 to 301 (IAIPLGATINMAGAAITISVL), 323 to 343 (VVASLCACGASGVAGGSLLLI), and 349 to 369 (LFGIGNDVAMQVVAIGFIIGI).

The protein belongs to the dicarboxylate/amino acid:cation symporter (DAACS) (TC 2.A.23) family.

The protein resides in the cell inner membrane. The catalysed reaction is L-serine(in) + Na(+)(in) = L-serine(out) + Na(+)(out). It catalyses the reaction L-threonine(in) + Na(+)(in) = L-threonine(out) + Na(+)(out). Its function is as follows. Involved in the import of serine and threonine into the cell, with the concomitant import of sodium (symport system). The polypeptide is Serine/threonine transporter SstT (Acidovorax sp. (strain JS42)).